A 323-amino-acid chain; its full sequence is tRNA U34 carboxymethyltransferase (323 aa).

Carboxy-S-adenosyl-L-methionine-binding positions include Lys91, Trp105, Lys110, Gly130, Ile181 to Glu182, Met196, Tyr200, and Arg315.

Belongs to the class I-like SAM-binding methyltransferase superfamily. CmoB family. As to quaternary structure, homotetramer.

It catalyses the reaction carboxy-S-adenosyl-L-methionine + 5-hydroxyuridine(34) in tRNA = 5-carboxymethoxyuridine(34) in tRNA + S-adenosyl-L-homocysteine + H(+). Its function is as follows. Catalyzes carboxymethyl transfer from carboxy-S-adenosyl-L-methionine (Cx-SAM) to 5-hydroxyuridine (ho5U) to form 5-carboxymethoxyuridine (cmo5U) at position 34 in tRNAs. The polypeptide is tRNA U34 carboxymethyltransferase (Yersinia pestis bv. Antiqua (strain Antiqua)).